A 91-amino-acid chain; its full sequence is Small ribosomal subunit protein uS19 (91 aa).

It belongs to the universal ribosomal protein uS19 family.

Functionally, protein S19 forms a complex with S13 that binds strongly to the 16S ribosomal RNA. This Erythrobacter litoralis (strain HTCC2594) protein is Small ribosomal subunit protein uS19.